Reading from the N-terminus, the 700-residue chain is MGQTVNEDSMDVKKENQEKTPQSSTSSVQRDDFHWEEYLKETGSISAPSECFRQSQIPPVNDFKVGMKLEARDPRNATSVCIATVIGITGARLRLRLDGSDNRNDFWRLVDSPDIQPVGTCEKEGDLLQPPLGYQMNTSSWPMFLLKTLNGSEMASATLFKKEPPKPPLNNFKVGMKLEAIDKKNPYLICPATIGDVKGDEVHITFDGWSGAFDYWCKYDSRDIFPAGWCRLTGDVLQPPGTSVPIVKNIAKTESSPSEASQHSMQSPQKTTLILPTQQVRRSSRIKPPGPTAVPKRSSSVKNITPRKKGPNSGKKEKPLPVICSTSAASLKSLTRDRGMLYKDVASGPCKIVMSTVCVYVNKHGNFGPHLDPKRIQQLPDHFGPGPVNVVLRRIVQACVDCALETKTVFGYLKPDNRGGEVITASFDGETHSIQLPPVNSASFALRFLENFCHSLQCDNLLSSQPFSSSRGHTHSSAEHDKNQSAKEDVTERQSTKRSPQQTVPYVVPLSPKLPKTKEYASEGEPLFAGGSAIPKEENLSEDSKSSSLNSGNYLNPACRNPMYIHTSVSQDFSRSVPGTTSSPLVGDISPKSSPHEVKFQMQRKSEAPSYIAVPDPSVLKQGFSKDPSTWSVDEVIQFMKHTDPQISGPLADLFRQHEIDGKALFLLKSDVMMKYMGLKLGPALKLCYYIEKLKEGKYS.

A disordered region spans residues 1–33 (MGQTVNEDSMDVKKENQEKTPQSSTSSVQRDDF). The span at 19-28 (KTPQSSTSSV) shows a compositional bias: polar residues. 2 MBT repeats span residues 33–131 (FHWE…LQPP) and 139–240 (SSWP…LQPP). The span at 253 to 281 (TESSPSEASQHSMQSPQKTTLILPTQQVR) shows a compositional bias: polar residues. 2 disordered regions span residues 253–320 (TESS…EKPL) and 466–550 (PFSS…SSLN). Phosphoserine is present on residues Ser-256, Ser-261, Ser-267, Ser-299, and Ser-300. Thr-305 is modified (phosphothreonine). The segment covering 476 to 495 (SSAEHDKNQSAKEDVTERQS) has biased composition (basic and acidic residues). Phosphoserine is present on Ser-499. A Phosphothreonine modification is found at Thr-503. Ser-511 carries the post-translational modification Phosphoserine. Residue Lys-518 forms a Glycyl lysine isopeptide (Lys-Gly) (interchain with G-Cter in SUMO2) linkage. Residue Ser-522 is modified to Phosphoserine. Basic and acidic residues predominate over residues 535 to 545 (PKEENLSEDSK). Residue Lys-536 forms a Glycyl lysine isopeptide (Lys-Gly) (interchain with G-Cter in SUMO2) linkage. Residues Ser-570, Ser-583, Ser-590, and Ser-594 each carry the phosphoserine modification. The segment covering 575–584 (RSVPGTTSSP) has biased composition (polar residues). Positions 575-594 (RSVPGTTSSPLVGDISPKSS) are disordered. Residues Lys-599 and Lys-605 each participate in a glycyl lysine isopeptide (Lys-Gly) (interchain with G-Cter in SUMO2) cross-link. The region spanning 631–700 (WSVDEVIQFM…IEKLKEGKYS (70 aa)) is the SAM domain.

It belongs to the SCM family. In terms of tissue distribution, highly expressed in placenta, thymus and testis. Detected at lower levels in brain, liver, skeletal muscle, pancreas and ovary.

It localises to the nucleus. Functionally, putative Polycomb group (PcG) protein. PcG proteins act by forming multiprotein complexes, which are required to maintain the transcriptionally repressive state of homeotic genes throughout development. This chain is Sex comb on midleg-like protein 2 (SCML2), found in Homo sapiens (Human).